A 98-amino-acid chain; its full sequence is Large ribosomal subunit protein uL23 (98 aa).

Belongs to the universal ribosomal protein uL23 family. Part of the 50S ribosomal subunit. Contacts protein L29, and trigger factor when it is bound to the ribosome.

One of the early assembly proteins it binds 23S rRNA. One of the proteins that surrounds the polypeptide exit tunnel on the outside of the ribosome. Forms the main docking site for trigger factor binding to the ribosome. In Nitrobacter hamburgensis (strain DSM 10229 / NCIMB 13809 / X14), this protein is Large ribosomal subunit protein uL23.